The primary structure comprises 637 residues: Biosynthetic arginine decarboxylase (637 aa).

N6-(pyridoxal phosphate)lysine is present on Lys101. Residue 286-296 coordinates substrate; that stretch reads FDVGGGLAVDY.

Belongs to the Orn/Lys/Arg decarboxylase class-II family. SpeA subfamily. The cofactor is Mg(2+). Pyridoxal 5'-phosphate serves as cofactor.

The enzyme catalyses L-arginine + H(+) = agmatine + CO2. It participates in amine and polyamine biosynthesis; agmatine biosynthesis; agmatine from L-arginine: step 1/1. Catalyzes the biosynthesis of agmatine from arginine. The chain is Biosynthetic arginine decarboxylase from Shewanella sp. (strain ANA-3).